The primary structure comprises 251 residues: MSRKVIAAGNWKMNKTPKEAVEFVQALKGRVADADTEVVVGVPFVCLPGVVEAAKGSNIKVAAQNMHWEEKGAFTGEVSGPMLAELGVDYVIIGHSERRQYFGETDETVNKKVHAAFKYGLKPIICVGESLTQREQGVTAELVRYQVKIALLGLSAEQVKEAVIAYEPIWAIGTGKTATNEQAEEVCGIIRECIKELYGQDVAEAIRIQYGGSVNAANAAELFNMPNIDGGLVGGASLKLDDFEKIAKYNK.

Residue asparagine 10–lysine 12 participates in substrate binding. Catalysis depends on histidine 95, which acts as the Electrophile. Glutamate 167 (proton acceptor) is an active-site residue. Residues glycine 173, serine 213, and glycine 234–glycine 235 contribute to the substrate site.

This sequence belongs to the triosephosphate isomerase family. In terms of assembly, homodimer.

It localises to the cytoplasm. The catalysed reaction is D-glyceraldehyde 3-phosphate = dihydroxyacetone phosphate. Its pathway is carbohydrate biosynthesis; gluconeogenesis. It functions in the pathway carbohydrate degradation; glycolysis; D-glyceraldehyde 3-phosphate from glycerone phosphate: step 1/1. Involved in the gluconeogenesis. Catalyzes stereospecifically the conversion of dihydroxyacetone phosphate (DHAP) to D-glyceraldehyde-3-phosphate (G3P). The chain is Triosephosphate isomerase from Acetivibrio thermocellus (strain ATCC 27405 / DSM 1237 / JCM 9322 / NBRC 103400 / NCIMB 10682 / NRRL B-4536 / VPI 7372) (Clostridium thermocellum).